The following is a 296-amino-acid chain: 4-hydroxy-tetrahydrodipicolinate synthase (296 aa).

Residue T47 participates in pyruvate binding. Catalysis depends on Y135, which acts as the Proton donor/acceptor. K163 serves as the catalytic Schiff-base intermediate with substrate. I205 is a binding site for pyruvate.

This sequence belongs to the DapA family. In terms of assembly, homotetramer; dimer of dimers.

It localises to the cytoplasm. It carries out the reaction L-aspartate 4-semialdehyde + pyruvate = (2S,4S)-4-hydroxy-2,3,4,5-tetrahydrodipicolinate + H2O + H(+). The protein operates within amino-acid biosynthesis; L-lysine biosynthesis via DAP pathway; (S)-tetrahydrodipicolinate from L-aspartate: step 3/4. Functionally, catalyzes the condensation of (S)-aspartate-beta-semialdehyde [(S)-ASA] and pyruvate to 4-hydroxy-tetrahydrodipicolinate (HTPA). This Macrococcus caseolyticus (strain JCSC5402) (Macrococcoides caseolyticum) protein is 4-hydroxy-tetrahydrodipicolinate synthase.